Reading from the N-terminus, the 318-residue chain is Aspartate carbamoyltransferase catalytic subunit (318 aa).

Residues R54 and T55 each contribute to the carbamoyl phosphate site. Residue K82 participates in L-aspartate binding. 3 residues coordinate carbamoyl phosphate: R104, H134, and Q137. R174 and R230 together coordinate L-aspartate. The carbamoyl phosphate site is built by G271 and P272.

This sequence belongs to the aspartate/ornithine carbamoyltransferase superfamily. ATCase family. Heterododecamer (2C3:3R2) of six catalytic PyrB chains organized as two trimers (C3), and six regulatory PyrI chains organized as three dimers (R2).

It carries out the reaction carbamoyl phosphate + L-aspartate = N-carbamoyl-L-aspartate + phosphate + H(+). It functions in the pathway pyrimidine metabolism; UMP biosynthesis via de novo pathway; (S)-dihydroorotate from bicarbonate: step 2/3. In terms of biological role, catalyzes the condensation of carbamoyl phosphate and aspartate to form carbamoyl aspartate and inorganic phosphate, the committed step in the de novo pyrimidine nucleotide biosynthesis pathway. The polypeptide is Aspartate carbamoyltransferase catalytic subunit (Clavibacter sepedonicus (Clavibacter michiganensis subsp. sepedonicus)).